Here is a 389-residue protein sequence, read N- to C-terminus: tRNA-specific 2-thiouridylase MnmA (389 aa).

ATP is bound by residues 30–37 (GLSGGVDS) and leucine 56. Cysteine 117 serves as the catalytic Nucleophile. The cysteines at positions 117 and 216 are disulfide-linked. An ATP-binding site is contributed by glycine 142. Positions 166 to 168 (KDQ) are interaction with tRNA. Cysteine 216 functions as the Cysteine persulfide intermediate in the catalytic mechanism. An interaction with tRNA region spans residues 321–322 (RY).

Belongs to the MnmA/TRMU family.

The protein localises to the cytoplasm. It catalyses the reaction S-sulfanyl-L-cysteinyl-[protein] + uridine(34) in tRNA + AH2 + ATP = 2-thiouridine(34) in tRNA + L-cysteinyl-[protein] + A + AMP + diphosphate + H(+). Its function is as follows. Catalyzes the 2-thiolation of uridine at the wobble position (U34) of tRNA, leading to the formation of s(2)U34. The protein is tRNA-specific 2-thiouridylase MnmA of Synechococcus sp. (strain CC9902).